A 210-amino-acid chain; its full sequence is ATP-dependent Clp protease proteolytic subunit (210 aa).

Residue Ser107 is the Nucleophile of the active site. Residue His132 is part of the active site.

This sequence belongs to the peptidase S14 family. As to quaternary structure, fourteen ClpP subunits assemble into 2 heptameric rings which stack back to back to give a disk-like structure with a central cavity, resembling the structure of eukaryotic proteasomes.

The protein localises to the cytoplasm. The catalysed reaction is Hydrolysis of proteins to small peptides in the presence of ATP and magnesium. alpha-casein is the usual test substrate. In the absence of ATP, only oligopeptides shorter than five residues are hydrolyzed (such as succinyl-Leu-Tyr-|-NHMec, and Leu-Tyr-Leu-|-Tyr-Trp, in which cleavage of the -Tyr-|-Leu- and -Tyr-|-Trp bonds also occurs).. Its function is as follows. Cleaves peptides in various proteins in a process that requires ATP hydrolysis. Has a chymotrypsin-like activity. Plays a major role in the degradation of misfolded proteins. The polypeptide is ATP-dependent Clp protease proteolytic subunit (Cereibacter sphaeroides (strain ATCC 17025 / ATH 2.4.3) (Rhodobacter sphaeroides)).